A 356-amino-acid chain; its full sequence is Malate dehydrogenase, glyoxysomal (356 aa).

The transit peptide at 1–36 (MQPIPDVNQRIARISAHLHPPKSQMEESSALRRANC) directs the protein to the glyoxysome. NAD(+) contacts are provided by residues 51–57 (GAAGGIG) and Asp77. The substrate site is built by Arg124 and Arg130. Residues Asn137 and 160–162 (ISN) each bind NAD(+). Residues Asn162 and Arg196 each contribute to the substrate site. Residue His220 is the Proton acceptor of the active site. Position 271 (Met271) interacts with NAD(+).

It belongs to the LDH/MDH superfamily. MDH type 1 family. Homodimer.

Its subcellular location is the glyoxysome. The enzyme catalyses (S)-malate + NAD(+) = oxaloacetate + NADH + H(+). The sequence is that of Malate dehydrogenase, glyoxysomal from Citrullus lanatus (Watermelon).